A 329-amino-acid chain; its full sequence is Trem-like transcript 2 protein (329 aa).

An N-terminal signal peptide occupies residues 1–24 (MEPWPLTFLLLLLLLLWLQGCVSG). The region spanning 25-126 (HSNENLYRKV…HFYPLVGFQL (102 aa)) is the Ig-like V-type domain. Topologically, residues 25-270 (HSNENLYRKV…NRSQETYIPA (246 aa)) are extracellular. 2 disulfides stabilise this stretch: C46-C110 and C61-C68. A disordered region spans residues 202-259 (FIDTSGTVTEPERNTESQPATLSPSNARSFSADPVTTSTMSRHQSSSLSTTGTCHPLT). Positions 217–259 (ESQPATLSPSNARSFSADPVTTSTMSRHQSSSLSTTGTCHPLT) are enriched in polar residues. A glycan (N-linked (GlcNAc...) asparagine) is linked at N261. Residues 271–291 (MVVVLTFLPAPVVLVVAYGFW) traverse the membrane as a helical segment. At 292–329 (KKRHMGRYNLGSNYAKPWIHLPEGPETPWKPAWSKITQ) the chain is on the cytoplasmic side.

Interacts with CD276 and this interaction enhances T-cell activation. Detected in B-lymphocytes and macrophages. Detected in spleen, lymph nodes, blood, bone marrow and cells from the peritoneal cavity (at protein level).

It localises to the cell membrane. In terms of biological role, cell surface receptor that may play a role in the innate and adaptive immune response. Acts as a counter-receptor for CD276 and interaction with CD276 on T-cells enhances T-cell activation. This Mus musculus (Mouse) protein is Trem-like transcript 2 protein (Treml2).